A 144-amino-acid chain; its full sequence is UPF0102 protein Veis_0630 (144 aa).

The disordered stretch occupies residues 11-31 (PPAAAPGPAPAPASAATASER).

Belongs to the UPF0102 family.

This is UPF0102 protein Veis_0630 from Verminephrobacter eiseniae (strain EF01-2).